Reading from the N-terminus, the 590-residue chain is Auxin response factor 20 (590 aa).

The segment at residues 126–224 (FTKVLTASDT…ELRVGIRRAR (99 aa)) is a DNA-binding region (TF-B3). One can recognise a PB1 domain in the interval 495-576 (RTCTKVQMQG…MVKKILIYSK (82 aa)).

Belongs to the ARF family. In terms of assembly, homodimers and heterodimers.

The protein localises to the nucleus. Its function is as follows. Auxin response factors (ARFs) are transcriptional factors that bind specifically to the DNA sequence 5'-TGTCTC-3' found in the auxin-responsive promoter elements (AuxREs). Could act as transcriptional activator or repressor. Formation of heterodimers with Aux/IAA proteins may alter their ability to modulate early auxin response genes expression. The chain is Auxin response factor 20 (ARF20) from Arabidopsis thaliana (Mouse-ear cress).